A 306-amino-acid chain; its full sequence is Glutaminase (306 aa).

Residues serine 64, asparagine 115, glutamate 159, asparagine 166, tyrosine 190, tyrosine 242, and valine 260 each contribute to the substrate site.

The protein belongs to the glutaminase family. In terms of assembly, homotetramer.

It catalyses the reaction L-glutamine + H2O = L-glutamate + NH4(+). The polypeptide is Glutaminase (Aliivibrio salmonicida (strain LFI1238) (Vibrio salmonicida (strain LFI1238))).